The chain runs to 304 residues: Light-independent protochlorophyllide reductase iron-sulfur ATP-binding protein (304 aa).

Residues 46–51 (GIGKST) and K75 each bind ATP. A Mg(2+)-binding site is contributed by S50. Residues C131 and C165 each coordinate [4Fe-4S] cluster. ATP-binding positions include 216–217 (NR) and 240–242 (PDL).

It belongs to the NifH/BchL/ChlL family. In terms of assembly, homodimer. Protochlorophyllide reductase is composed of three subunits; BchL, BchN and BchB. [4Fe-4S] cluster is required as a cofactor.

It catalyses the reaction chlorophyllide a + oxidized 2[4Fe-4S]-[ferredoxin] + 2 ADP + 2 phosphate = protochlorophyllide a + reduced 2[4Fe-4S]-[ferredoxin] + 2 ATP + 2 H2O. Its pathway is porphyrin-containing compound metabolism; bacteriochlorophyll biosynthesis (light-independent). In terms of biological role, component of the dark-operative protochlorophyllide reductase (DPOR) that uses Mg-ATP and reduced ferredoxin to reduce ring D of protochlorophyllide (Pchlide) to form chlorophyllide a (Chlide). This reaction is light-independent. The L component serves as a unique electron donor to the NB-component of the complex, and binds Mg-ATP. This chain is Light-independent protochlorophyllide reductase iron-sulfur ATP-binding protein, found in Rhodobacter capsulatus (strain ATCC BAA-309 / NBRC 16581 / SB1003).